Consider the following 207-residue polypeptide: MASSLCVSNSTICPLPNVSSQPLLSFSHSLRPFISKSKPMCASIQKRDGSQFVVKSQALDFSGTFFEGGFGSDDDPTSPSGSGVSTALEDKPEPQCPPGLRQYETMAVLRPDMSEDERLGLTQKYEELLVAGGGMYVEVFNRGVIPLAYSIRKKNKAGETNTYLDGIYLLFTYFTKPESIVPLETVLTADDDIIRSSSFKIKKRKYN.

The N-terminal 59 residues, 1-59, are a transit peptide targeting the chloroplast; it reads MASSLCVSNSTICPLPNVSSQPLLSFSHSLRPFISKSKPMCASIQKRDGSQFVVKSQAL. The disordered stretch occupies residues 69-99; it reads GFGSDDDPTSPSGSGVSTALEDKPEPQCPPG. Positions 77–86 are enriched in low complexity; sequence TSPSGSGVST.

The protein belongs to the bacterial ribosomal protein bS6 family. Part of the 30S ribosomal subunit.

The protein localises to the plastid. Its subcellular location is the chloroplast. Functionally, binds together with bS18 to 16S ribosomal RNA. In Arabidopsis thaliana (Mouse-ear cress), this protein is Small ribosomal subunit protein bS6c (RPS6).